The sequence spans 159 residues: Ribosomal RNA large subunit methyltransferase H (159 aa).

Residues Leu-76, Gly-108, and 127-132 (FSKMTF) each bind S-adenosyl-L-methionine.

This sequence belongs to the RNA methyltransferase RlmH family. As to quaternary structure, homodimer.

The protein resides in the cytoplasm. The enzyme catalyses pseudouridine(1915) in 23S rRNA + S-adenosyl-L-methionine = N(3)-methylpseudouridine(1915) in 23S rRNA + S-adenosyl-L-homocysteine + H(+). Specifically methylates the pseudouridine at position 1915 (m3Psi1915) in 23S rRNA. The protein is Ribosomal RNA large subunit methyltransferase H of Oceanobacillus iheyensis (strain DSM 14371 / CIP 107618 / JCM 11309 / KCTC 3954 / HTE831).